Here is a 166-residue protein sequence, read N- to C-terminus: Endoribonuclease YbeY (166 aa).

Zn(2+) contacts are provided by H129, H133, and H139.

It belongs to the endoribonuclease YbeY family. Zn(2+) serves as cofactor.

It localises to the cytoplasm. In terms of biological role, single strand-specific metallo-endoribonuclease involved in late-stage 70S ribosome quality control and in maturation of the 3' terminus of the 16S rRNA. This Mesorhizobium japonicum (strain LMG 29417 / CECT 9101 / MAFF 303099) (Mesorhizobium loti (strain MAFF 303099)) protein is Endoribonuclease YbeY.